The following is a 101-amino-acid chain: Small ribosomal subunit protein uS14 (101 aa).

This sequence belongs to the universal ribosomal protein uS14 family. As to quaternary structure, part of the 30S ribosomal subunit. Contacts proteins S3 and S10.

Its function is as follows. Binds 16S rRNA, required for the assembly of 30S particles and may also be responsible for determining the conformation of the 16S rRNA at the A site. In Hyphomonas neptunium (strain ATCC 15444), this protein is Small ribosomal subunit protein uS14.